A 401-amino-acid polypeptide reads, in one-letter code: Multidrug resistance protein MdtH (401 aa).

Over 1-12 (MSRVSQARNLGK) the chain is Cytoplasmic. A helical transmembrane segment spans residues 13-33 (YFLLIDNMLVVLGFFVVFPLV). At 34-98 (SIRFVDQMGW…GFATMGIAHE (65 aa)) the chain is on the periplasmic side. Residues 99-116 (PWLLWFSCLLSGLGGTLF) form a helical membrane-spanning segment. Residues 117–137 (DPPRSALVVKLMPQQRGRFFS) lie on the Cytoplasmic side of the membrane. Residues 138-158 (LLMMQDSAGAVIGALLGSWLL) traverse the membrane as a helical segment. Topologically, residues 159–163 (QYDFR) are periplasmic. The chain crosses the membrane as a helical span at residues 164–184 (LVCATGAVLFVLCAAFNAWLL). At 185-212 (PAWKLSTIRTPVREGMTRVMRDKRFVTY) the chain is on the cytoplasmic side. Residues 213-233 (VLTLAGYYMLAVQVMLMLPIM) form a helical membrane-spanning segment. Residues 234–242 (VNDVAGAPS) lie on the Periplasmic side of the membrane. Residues 243 to 263 (AVKWMYAIEACLSLTLLYPIA) traverse the membrane as a helical segment. The Cytoplasmic segment spans residues 264–275 (RWSEKHFRLEHR). The chain crosses the membrane as a helical span at residues 276-296 (LMAGLLIMSLSMMPVGMVSGL). At 297–298 (QQ) the chain is on the periplasmic side. Residues 299-319 (LFTLICLFYIGSIIAEPARET) form a helical membrane-spanning segment. The Cytoplasmic segment spans residues 320–338 (LSASLADARARGSYMGFSR). The helical transmembrane segment at 339-359 (LGLAIGGTIGYIGGGWLFDLG) threads the bilayer. At 360 to 366 (KSAHQPE) the chain is on the periplasmic side. Residues 367 to 387 (LPWMMLGIIGIFTFLALGWQF) traverse the membrane as a helical segment. Over 388–401 (SQKRAARRLLERDA) the chain is Cytoplasmic.

This sequence belongs to the major facilitator superfamily. DHA1 family. MdtH (TC 2.A.1.2.21) subfamily.

The protein localises to the cell inner membrane. The chain is Multidrug resistance protein MdtH from Shigella dysenteriae serotype 1 (strain Sd197).